We begin with the raw amino-acid sequence, 197 residues long: Protein jagunal (197 aa).

At 1-39 the chain is on the cytoplasmic side; the sequence is MATRGGPMVAGTDGNDFEFRQRVAGTYQISLLNKSRLKY. Residues 40 to 60 traverse the membrane as a helical segment; it reads CIFFHALLFFVMLAKLTSDIL. At 61-78 the chain is on the lumenal side; the sequence is DHLDIFVLEIEELEVPPP. The helical transmembrane segment at 79–99 threads the bilayer; sequence LWWEYVWAASLLTSFLGLSAA. Residues 100–109 are Cytoplasmic-facing; it reads RGNKVREMQK. Residues 110–130 traverse the membrane as a helical segment; the sequence is YMVAILLFAILPLFYCFAYYF. Topologically, residues 131 to 159 are lumenal; sequence SDVWEFATLDKSVELDETDIFVWRGYPYG. Residues 160–180 traverse the membrane as a helical segment; sequence VFWYAFCFVGFQVHGFTLYFA. Residues 181-197 are Cytoplasmic-facing; the sequence is YNLVKAWKARTATRKFQ.

This sequence belongs to the jagunal family.

It localises to the endoplasmic reticulum membrane. In terms of biological role, required for endoplasmic reticulum organization and proper vesicular traffic during vitellogenesis. Required for oocyte and bristle growth. In Drosophila melanogaster (Fruit fly), this protein is Protein jagunal.